Reading from the N-terminus, the 316-residue chain is Ribosomal RNA small subunit methyltransferase H (316 aa).

S-adenosyl-L-methionine-binding positions include 35-37, Asp55, Phe79, Asp101, and Gln108; that span reads GGH.

The protein belongs to the methyltransferase superfamily. RsmH family.

It is found in the cytoplasm. It catalyses the reaction cytidine(1402) in 16S rRNA + S-adenosyl-L-methionine = N(4)-methylcytidine(1402) in 16S rRNA + S-adenosyl-L-homocysteine + H(+). Functionally, specifically methylates the N4 position of cytidine in position 1402 (C1402) of 16S rRNA. In Vibrio proteolyticus (Aeromonas proteolytica), this protein is Ribosomal RNA small subunit methyltransferase H.